A 503-amino-acid polypeptide reads, in one-letter code: UDP-N-acetylmuramoylalanine--D-glutamate ligase (503 aa).

129 to 135 serves as a coordination point for ATP; sequence GTNGKTT.

It belongs to the MurCDEF family.

It is found in the cytoplasm. It carries out the reaction UDP-N-acetyl-alpha-D-muramoyl-L-alanine + D-glutamate + ATP = UDP-N-acetyl-alpha-D-muramoyl-L-alanyl-D-glutamate + ADP + phosphate + H(+). It participates in cell wall biogenesis; peptidoglycan biosynthesis. Cell wall formation. Catalyzes the addition of glutamate to the nucleotide precursor UDP-N-acetylmuramoyl-L-alanine (UMA). The sequence is that of UDP-N-acetylmuramoylalanine--D-glutamate ligase from Burkholderia vietnamiensis (strain G4 / LMG 22486) (Burkholderia cepacia (strain R1808)).